Here is a 910-residue protein sequence, read N- to C-terminus: Protein translocase subunit SecA (910 aa).

ATP-binding positions include Gln86, 104–108 (GEGKT), and Asp499. Residues Cys894, Cys896, Cys905, and His906 each contribute to the Zn(2+) site.

It belongs to the SecA family. In terms of assembly, monomer and homodimer. Part of the essential Sec protein translocation apparatus which comprises SecA, SecYEG and auxiliary proteins SecDF-YajC and YidC. Zn(2+) is required as a cofactor.

The protein localises to the cell inner membrane. It localises to the cytoplasm. It catalyses the reaction ATP + H2O + cellular proteinSide 1 = ADP + phosphate + cellular proteinSide 2.. Part of the Sec protein translocase complex. Interacts with the SecYEG preprotein conducting channel. Has a central role in coupling the hydrolysis of ATP to the transfer of proteins into and across the cell membrane, serving both as a receptor for the preprotein-SecB complex and as an ATP-driven molecular motor driving the stepwise translocation of polypeptide chains across the membrane. This is Protein translocase subunit SecA from Rickettsia bellii (strain RML369-C).